Here is a 365-residue protein sequence, read N- to C-terminus: MGPCSGSRLGPPEAESPSQPPKRRKKRYLRHDKPPYTYLAMIALVIQAAPSRRLKLAQIIRQVQAVFPFFREDYEGWKDSIRHNLSSNRCFRKVPKDPAKPQAKGNFWAVDVSLIPAEALRLQNTALCRRWQNGGARGAFAKDLGPYVLHGRPYRPPSPPPPPSEGFSIKSLLGGSGEGAPWPGLAPQSSPVPAGTGNSGEEAVPTPPLPSSERPLWPLCPLPGPTRVEGETVQGGAIGPSTLSPEPRAWPLHLLQGTAVPGGRSSGGHRASLWGQLPTSYLPIYTPNVVMPLAPPPTSCPQCPSTSPAYWGVAPETRGPPGLLCDLDALFQGVPPNKSIYDVWVSHPRDLAAPGPGWLLSWCSL.

The tract at residues M1–L29 is disordered. The segment at residues D32 to C128 is a DNA-binding region (fork-head). The segment at G151–P215 is disordered. A compositionally biased stretch (pro residues) spans Y154 to S164. The tract at residues L273–P354 is SMAD-interaction domain (SID). A Fast/FoxH1 motif 1 (FM1) motif is present at residues L277–Y281. The short motif at P287–L293 is the Fast/FoxH1 motif 2 (FM2) element. The SMAD interaction motif (SIM) motif lies at L327–P348.

Interacts with the MH2 domains of SMAD2 and SMAD3. In terms of tissue distribution, ubiquitous.

The protein localises to the nucleus. Transcriptional activator. Recognizes and binds to the DNA sequence 5'-TGT[GT][GT]ATT-3'. Required for induction of the goosecoid (GSC) promoter by TGF-beta or activin signaling. Forms a transcriptionally active complex containing FOXH1/SMAD2/SMAD4 on a site on the GSC promoter called TARE (TGF-beta/activin response element). The sequence is that of Forkhead box protein H1 (FOXH1) from Homo sapiens (Human).